A 104-amino-acid chain; its full sequence is Large ribosomal subunit protein uL23 (104 aa).

This sequence belongs to the universal ribosomal protein uL23 family. Part of the 50S ribosomal subunit. Contacts protein L29, and trigger factor when it is bound to the ribosome.

Functionally, one of the early assembly proteins it binds 23S rRNA. One of the proteins that surrounds the polypeptide exit tunnel on the outside of the ribosome. Forms the main docking site for trigger factor binding to the ribosome. In Trichormus variabilis (strain ATCC 29413 / PCC 7937) (Anabaena variabilis), this protein is Large ribosomal subunit protein uL23.